Here is a 775-residue protein sequence, read N- to C-terminus: Venom dipeptidyl peptidase 4 (775 aa).

The N-terminal stretch at Met1–Gly23 is a signal peptide. N-linked (GlcNAc...) asparagine glycosylation is found at Asn68 and Asn239. Disulfide bonds link Cys450/Cys453 and Cys463/Cys481. Residues Asn473, Asn505, Asn578, and Asn631 are each glycosylated (N-linked (GlcNAc...) asparagine). The active-site Charge relay system is Ser639. Cys659 and Cys770 are disulfide-bonded. Asn689 and Asn694 each carry an N-linked (GlcNAc...) asparagine glycan. Residues Asp718 and His750 each act as charge relay system in the active site.

This sequence belongs to the peptidase S9B family. DPPIV subfamily. Expressed by the venom duct.

Its subcellular location is the secreted. It catalyses the reaction Release of an N-terminal dipeptide, Xaa-Yaa-|-Zaa-, from a polypeptide, preferentially when Yaa is Pro, provided Zaa is neither Pro nor hydroxyproline.. Its activity is regulated as follows. Inhibited by diprotin A. Venom dipeptidyl-peptidase which removes N-terminal dipeptides sequentially from polypeptides having unsubstituted N-termini provided that the penultimate residue is proline. May process promelittin into its active form and/or modulate the chemotactic activity of immune cells after the insect sting. The polypeptide is Venom dipeptidyl peptidase 4 (Apis mellifera (Honeybee)).